Here is a 580-residue protein sequence, read N- to C-terminus: tRNA-guanine(15) transglycosylase (580 aa).

Asp-91 serves as the catalytic Nucleophile. Substrate is bound by residues Asp-126 and Ala-192. Zn(2+) contacts are provided by Cys-275, Cys-277, and Cys-280. The PUA domain maps to 504–579; the sequence is RMRVVVDEDA…LAVKVRRGVE (76 aa).

The protein belongs to the archaeosine tRNA-ribosyltransferase family. It depends on Zn(2+) as a cofactor.

The enzyme catalyses guanosine(15) in tRNA + 7-cyano-7-deazaguanine = 7-cyano-7-carbaguanosine(15) in tRNA + guanine. The protein operates within tRNA modification; archaeosine-tRNA biosynthesis. In terms of biological role, exchanges the guanine residue with 7-cyano-7-deazaguanine (preQ0) at position 15 in the dihydrouridine loop (D-loop) of archaeal tRNAs. This is tRNA-guanine(15) transglycosylase from Thermococcus onnurineus (strain NA1).